We begin with the raw amino-acid sequence, 273 residues long: Putative pyruvate, phosphate dikinase regulatory protein (273 aa).

149–156 is a binding site for ADP; sequence GPSRTSKT.

It belongs to the pyruvate, phosphate/water dikinase regulatory protein family. PDRP subfamily.

It carries out the reaction N(tele)-phospho-L-histidyl/L-threonyl-[pyruvate, phosphate dikinase] + ADP = N(tele)-phospho-L-histidyl/O-phospho-L-threonyl-[pyruvate, phosphate dikinase] + AMP + H(+). The enzyme catalyses N(tele)-phospho-L-histidyl/O-phospho-L-threonyl-[pyruvate, phosphate dikinase] + phosphate + H(+) = N(tele)-phospho-L-histidyl/L-threonyl-[pyruvate, phosphate dikinase] + diphosphate. Functionally, bifunctional serine/threonine kinase and phosphorylase involved in the regulation of the pyruvate, phosphate dikinase (PPDK) by catalyzing its phosphorylation/dephosphorylation. In Rickettsia massiliae (strain Mtu5), this protein is Putative pyruvate, phosphate dikinase regulatory protein.